A 381-amino-acid chain; its full sequence is Cytochrome b (381 aa).

Transmembrane regions (helical) follow at residues 33-53, 77-98, 113-133, and 178-198; these read FGSL…FLAM, WLLR…FLHV, WNIG…GYVL, and FFAF…VHLL. The heme b site is built by histidine 83 and histidine 97. Heme b-binding residues include histidine 182 and histidine 196. Histidine 201 provides a ligand contact to a ubiquinone. Transmembrane regions (helical) follow at residues 226–246, 288–308, 320–340, and 347–367; these read IKDA…GLFS, LGGV…PLLH, IFQT…WIGG, and FIII…ALMP.

It belongs to the cytochrome b family. The cytochrome bc1 complex contains 11 subunits: 3 respiratory subunits (MT-CYB, CYC1 and UQCRFS1), 2 core proteins (UQCRC1 and UQCRC2) and 6 low-molecular weight proteins (UQCRH/QCR6, UQCRB/QCR7, UQCRQ/QCR8, UQCR10/QCR9, UQCR11/QCR10 and a cleavage product of UQCRFS1). This cytochrome bc1 complex then forms a dimer. It depends on heme b as a cofactor.

It localises to the mitochondrion inner membrane. Functionally, component of the ubiquinol-cytochrome c reductase complex (complex III or cytochrome b-c1 complex) that is part of the mitochondrial respiratory chain. The b-c1 complex mediates electron transfer from ubiquinol to cytochrome c. Contributes to the generation of a proton gradient across the mitochondrial membrane that is then used for ATP synthesis. The sequence is that of Cytochrome b (MT-CYB) from Dasykaluta rosamondae (Little red marsupial mouse).